Consider the following 247-residue polypeptide: Carboxy-S-adenosyl-L-methionine synthase (247 aa).

S-adenosyl-L-methionine-binding positions include tyrosine 39, 89-90 (DN), 117-118 (DI), asparagine 132, and arginine 199.

It belongs to the class I-like SAM-binding methyltransferase superfamily. Cx-SAM synthase family. In terms of assembly, homodimer.

The enzyme catalyses prephenate + S-adenosyl-L-methionine = carboxy-S-adenosyl-L-methionine + 3-phenylpyruvate + H2O. Its function is as follows. Catalyzes the conversion of S-adenosyl-L-methionine (SAM) to carboxy-S-adenosyl-L-methionine (Cx-SAM). The chain is Carboxy-S-adenosyl-L-methionine synthase from Sodalis glossinidius (strain morsitans).